Consider the following 1217-residue polypeptide: ATP-dependent helicase/nuclease subunit A (1217 aa).

The 466-residue stretch at 10-475 folds into the UvrD-like helicase ATP-binding domain; that stretch reads VIWTDAQWQS…IDLSQNFRSR (466 aa). Position 31-38 (31-38) interacts with ATP; it reads AAAGSGKT. The UvrD-like helicase C-terminal domain maps to 476 to 786; that stretch reads KEVLSTTNYI…RMMTIHSSKG (311 aa).

The protein belongs to the helicase family. AddA subfamily. In terms of assembly, heterodimer of AddA and AddB/RexB. Mg(2+) serves as cofactor.

The enzyme catalyses Couples ATP hydrolysis with the unwinding of duplex DNA by translocating in the 3'-5' direction.. It carries out the reaction ATP + H2O = ADP + phosphate + H(+). The heterodimer acts as both an ATP-dependent DNA helicase and an ATP-dependent, dual-direction single-stranded exonuclease. Recognizes the chi site generating a DNA molecule suitable for the initiation of homologous recombination. The AddA nuclease domain is required for chi fragment generation; this subunit has the helicase and 3' -&gt; 5' nuclease activities. This Staphylococcus aureus (strain MRSA252) protein is ATP-dependent helicase/nuclease subunit A.